We begin with the raw amino-acid sequence, 542 residues long: Polysialoglycoprotein (542 aa).

The N-terminal stretch at 1–21 (MIMGGVRELLLVVMTVGVVKV) is a signal peptide. Positions 22 to 120 (SCYPVGKSQK…TSEAATGPSG (99 aa)) are excised as a propeptide. A disordered region spans residues 70–542 (EEYLETNEVE…GPSGDDAMDI (473 aa)). Positions 78–95 (VESQASPNHGSSPANDAL) are enriched in polar residues. The segment covering 97–106 (SEEKLRRVSS) has biased composition (basic and acidic residues). A compositionally biased stretch (low complexity) spans 107 to 116 (DDAATSEAAT). A run of 32 repeats spans residues 121-133 (DDAT…GPSG), 134-146 (DDAT…GPSG), 147-159 (DDAT…GPSG), 160-172 (DDAT…GPSG), 173-185 (DDAT…GPSG), 186-198 (DDAT…GPSG), 199-211 (DDAT…GPSG), 212-224 (DDAT…GPSG), 225-237 (DDAT…GPSG), 238-250 (DDAT…GPSG), 251-263 (DDAT…GPSG), 264-276 (DDAT…GPSG), 277-289 (DDAT…GPSG), 290-302 (DDAT…GPSG), 303-315 (DDAT…GPSG), 316-328 (DDAT…GPSG), 329-341 (DDAT…GPSG), 342-354 (DDAT…GPSG), 355-367 (DDAT…GPSG), 368-380 (DDAT…GPSG), 381-393 (DDAT…GPSG), 394-406 (DDAT…GPSG), 407-419 (DDAT…GPSG), 420-432 (DDAT…GPSG), 433-445 (DDAT…GPSG), 446-458 (DDAT…GPSG), 459-471 (DDAT…GPSG), 472-484 (DDAT…GPSG), 485-497 (DDAT…GPSG), 498-510 (DDAT…GPSG), 511-523 (DDAT…GPSG), and 524-536 (DDAT…GPSG). Residues 121 to 536 (DDATSEAATG…TSEAATGPSG (416 aa)) are 32 X 13 AA tandem repeats of D-D-A-T-S-E-A-A-T-G-P-S-G. O-linked (GalNAc...) threonine glycosylation occurs at threonine 124. A glycan (O-linked (GalNAc...) serine) is linked at serine 125. Residues threonine 129 and threonine 137 are each glycosylated (O-linked (GalNAc...) threonine). O-linked (GalNAc...) serine glycosylation is present at serine 138. 2 O-linked (GalNAc...) threonine glycosylation sites follow: threonine 142 and threonine 150. A glycan (O-linked (GalNAc...) serine) is linked at serine 151. O-linked (GalNAc...) threonine glycosylation is found at threonine 155 and threonine 163. Serine 164 is a glycosylation site (O-linked (GalNAc...) serine). O-linked (GalNAc...) threonine glycans are attached at residues threonine 168 and threonine 176. An O-linked (GalNAc...) serine glycan is attached at serine 177. O-linked (GalNAc...) threonine glycans are attached at residues threonine 181 and threonine 189. Residue serine 190 is glycosylated (O-linked (GalNAc...) serine). Threonine 194 and threonine 202 each carry an O-linked (GalNAc...) threonine glycan. An O-linked (GalNAc...) serine glycan is attached at serine 203. Threonine 207 and threonine 215 each carry an O-linked (GalNAc...) threonine glycan. O-linked (GalNAc...) serine glycosylation is present at serine 216. Residues threonine 220 and threonine 228 are each glycosylated (O-linked (GalNAc...) threonine). Serine 229 carries an O-linked (GalNAc...) serine glycan. Threonine 233 and threonine 241 each carry an O-linked (GalNAc...) threonine glycan. Serine 242 carries O-linked (GalNAc...) serine glycosylation. 2 O-linked (GalNAc...) threonine glycosylation sites follow: threonine 246 and threonine 254. An O-linked (GalNAc...) serine glycan is attached at serine 255. O-linked (GalNAc...) threonine glycosylation is found at threonine 259 and threonine 267. Serine 268 is a glycosylation site (O-linked (GalNAc...) serine). 2 O-linked (GalNAc...) threonine glycosylation sites follow: threonine 272 and threonine 280. Residue serine 281 is glycosylated (O-linked (GalNAc...) serine). O-linked (GalNAc...) threonine glycans are attached at residues threonine 285 and threonine 293. O-linked (GalNAc...) serine glycosylation occurs at serine 294. Residues threonine 298 and threonine 306 are each glycosylated (O-linked (GalNAc...) threonine). An O-linked (GalNAc...) serine glycan is attached at serine 307. Threonine 311 and threonine 319 each carry an O-linked (GalNAc...) threonine glycan. The O-linked (GalNAc...) serine glycan is linked to serine 320. Threonine 324 and threonine 332 each carry an O-linked (GalNAc...) threonine glycan. Serine 333 is a glycosylation site (O-linked (GalNAc...) serine). O-linked (GalNAc...) threonine glycosylation is found at threonine 337 and threonine 345. O-linked (GalNAc...) serine glycosylation is present at serine 346. O-linked (GalNAc...) threonine glycans are attached at residues threonine 350 and threonine 358. Serine 359 is a glycosylation site (O-linked (GalNAc...) serine). O-linked (GalNAc...) threonine glycosylation is found at threonine 363 and threonine 371. O-linked (GalNAc...) serine glycosylation occurs at serine 372. O-linked (GalNAc...) threonine glycosylation is found at threonine 376 and threonine 384. O-linked (GalNAc...) serine glycosylation occurs at serine 385. Residues threonine 389 and threonine 397 are each glycosylated (O-linked (GalNAc...) threonine). An O-linked (GalNAc...) serine glycan is attached at serine 398. Threonine 402 and threonine 410 each carry an O-linked (GalNAc...) threonine glycan. A glycan (O-linked (GalNAc...) serine) is linked at serine 411. Threonine 415 and threonine 423 each carry an O-linked (GalNAc...) threonine glycan. The O-linked (GalNAc...) serine glycan is linked to serine 424. Residues threonine 428 and threonine 436 are each glycosylated (O-linked (GalNAc...) threonine). Residue serine 437 is glycosylated (O-linked (GalNAc...) serine). Threonine 441 and threonine 449 each carry an O-linked (GalNAc...) threonine glycan. O-linked (GalNAc...) serine glycosylation is present at serine 450. O-linked (GalNAc...) threonine glycosylation is found at threonine 454 and threonine 462. Serine 463 carries an O-linked (GalNAc...) serine glycan. Residues threonine 467 and threonine 475 are each glycosylated (O-linked (GalNAc...) threonine). An O-linked (GalNAc...) serine glycan is attached at serine 476. Threonine 480 and threonine 488 each carry an O-linked (GalNAc...) threonine glycan. Serine 489 carries an O-linked (GalNAc...) serine glycan. O-linked (GalNAc...) threonine glycans are attached at residues threonine 493 and threonine 501. O-linked (GalNAc...) serine glycosylation occurs at serine 502. Residues threonine 506 and threonine 514 are each glycosylated (O-linked (GalNAc...) threonine). Serine 515 carries O-linked (GalNAc...) serine glycosylation. Threonine 519 and threonine 527 each carry an O-linked (GalNAc...) threonine glycan. Serine 528 carries O-linked (GalNAc...) serine glycosylation. Residue threonine 532 is glycosylated (O-linked (GalNAc...) threonine). A propeptide spanning residues 537 to 542 (DDAMDI) is cleaved from the precursor.

In terms of processing, most sialic acid residues exist in the form of polysialyl groups partly capped with deaminoneuraminic acid. In terms of tissue distribution, cortical alveoli of immature ovaries.

In response to egg activation, PSGP is discharged by exocytosis into the perivitelline space, where it undergoes rapid proteolysis into glycotridecapeptides. During fertilization and/or early development the glycotridecapeptides prevent polyspermy or are involved in the formation of a fertilization membrane. In Oncorhynchus mykiss (Rainbow trout), this protein is Polysialoglycoprotein.